A 1396-amino-acid polypeptide reads, in one-letter code: uncharacterized protein (1396 aa).

88-95 (AYKKWGRS) is a binding site for ATP. Disordered regions lie at residues 146–165 (EKIH…LSPT) and 198–388 (KPCS…VKDL). Low complexity predominate over residues 198–221 (KPCSYSSSSSSSTVPPASTDTSSP). Residues 242 to 268 (MHEKAQSRSRHEKESKLSSSTIEEKPA) show a composition bias toward basic and acidic residues. The span at 286–300 (SWSSGSSEAGSSSSG) shows a compositional bias: low complexity. A compositionally biased stretch (basic residues) spans 312-327 (VKVRHKAREIRNRKGR). S817 and S1083 each carry phosphoserine. Residues 1113–1137 (PISASELSPGGGSESEFESEKDEAS) form a disordered region. S1197 and S1339 each carry phosphoserine. A disordered region spans residues 1347-1396 (TGERGSETKPNGLHRKMCSSASSDTGDTGSEAGGEWVGPSREELFSRTHL). Low complexity predominate over residues 1365-1376 (SSASSDTGDTGS). Residues 1386–1396 (SREELFSRTHL) show a composition bias toward basic and acidic residues.

This is an uncharacterized protein from Mus musculus (Mouse).